A 78-amino-acid polypeptide reads, in one-letter code: Large ribosomal subunit protein bL28 (78 aa).

It belongs to the bacterial ribosomal protein bL28 family.

The chain is Large ribosomal subunit protein bL28 from Trichormus variabilis (strain ATCC 29413 / PCC 7937) (Anabaena variabilis).